The primary structure comprises 191 residues: Large ribosomal subunit protein uL6B (191 aa).

This sequence belongs to the universal ribosomal protein uL6 family. In terms of assembly, component of the large ribosomal subunit (LSU). Mature yeast ribosomes consist of a small (40S) and a large (60S) subunit. The 40S small subunit contains 1 molecule of ribosomal RNA (18S rRNA) and 33 different proteins (encoded by 57 genes). The large 60S subunit contains 3 rRNA molecules (25S, 5.8S and 5S rRNA) and 46 different proteins (encoded by 81 genes).

The protein resides in the cytoplasm. Its function is as follows. Component of the ribosome, a large ribonucleoprotein complex responsible for the synthesis of proteins in the cell. The small ribosomal subunit (SSU) binds messenger RNAs (mRNAs) and translates the encoded message by selecting cognate aminoacyl-transfer RNA (tRNA) molecules. The large subunit (LSU) contains the ribosomal catalytic site termed the peptidyl transferase center (PTC), which catalyzes the formation of peptide bonds, thereby polymerizing the amino acids delivered by tRNAs into a polypeptide chain. The nascent polypeptides leave the ribosome through a tunnel in the LSU and interact with protein factors that function in enzymatic processing, targeting, and the membrane insertion of nascent chains at the exit of the ribosomal tunnel. The polypeptide is Large ribosomal subunit protein uL6B (Saccharomyces cerevisiae (strain ATCC 204508 / S288c) (Baker's yeast)).